The following is a 139-amino-acid chain: Drosulfakinins (139 aa).

The first 35 residues, 1 to 35 (MGHRGMGCAHFATMAMPLWALTFYLLVVLPVPSQT), serve as a signal peptide directing secretion. A propeptide spanning residues 36–71 (ASVEVGKEERRLQDLDPKMGSEAGNTDGLSLARFGS) is cleaved from the precursor. Phe-80 is modified (phenylalanine amide). Residues 81–109 (GHRVPIISRPVIPIELDLLMDNEDDRTMS) constitute a propeptide that is removed on maturation. Tyr-115 is modified (sulfotyrosine). A Phenylalanine amide modification is found at Phe-120. A Sulfotyrosine modification is found at Tyr-132. Position 137 is a phenylalanine amide (Phe-137).

It belongs to the gastrin/cholecystokinin family.

The protein resides in the secreted. Drosulfakinin-0 (DSK 0) plays diverse biological roles including regulating gut muscle contraction in adults but not in larvae. This chain is Drosulfakinins, found in Drosophila pseudoobscura pseudoobscura (Fruit fly).